Consider the following 224-residue polypeptide: Octanoyltransferase (224 aa).

One can recognise a BPL/LPL catalytic domain in the interval 38–213; the sequence is SATVDELWWV…YLVRRLGYSA (176 aa). Residues 77–84, 144–146, and 157–159 each bind substrate; these read RGGQVTYH, SLG, and GLS. Cys-175 serves as the catalytic Acyl-thioester intermediate.

The protein belongs to the LipB family.

The protein localises to the cytoplasm. It carries out the reaction octanoyl-[ACP] + L-lysyl-[protein] = N(6)-octanoyl-L-lysyl-[protein] + holo-[ACP] + H(+). It functions in the pathway protein modification; protein lipoylation via endogenous pathway; protein N(6)-(lipoyl)lysine from octanoyl-[acyl-carrier-protein]: step 1/2. In terms of biological role, catalyzes the transfer of endogenously produced octanoic acid from octanoyl-acyl-carrier-protein onto the lipoyl domains of lipoate-dependent enzymes. Lipoyl-ACP can also act as a substrate although octanoyl-ACP is likely to be the physiological substrate. The protein is Octanoyltransferase of Nitrosococcus oceani (strain ATCC 19707 / BCRC 17464 / JCM 30415 / NCIMB 11848 / C-107).